A 556-amino-acid chain; its full sequence is Probable Xaa-Pro aminopeptidase SS1G_06948 (556 aa).

Mn(2+) is bound by residues D305, D316, E460, and E501.

The protein belongs to the peptidase M24B family. The cofactor is Mn(2+).

It carries out the reaction Release of any N-terminal amino acid, including proline, that is linked to proline, even from a dipeptide or tripeptide.. Its function is as follows. Catalyzes the removal of a penultimate prolyl residue from the N-termini of peptides. The sequence is that of Probable Xaa-Pro aminopeptidase SS1G_06948 from Sclerotinia sclerotiorum (strain ATCC 18683 / 1980 / Ss-1) (White mold).